The following is a 2222-amino-acid chain: Protein SWEETIE (2222 aa).

HEAT repeat units lie at residues 37 to 75 (LLCF…LVTL), 228 to 265 (SEFD…LGMH), 331 to 368 (SELQ…GVID), 510 to 540 (PARL…SEKE), 541 to 578 (AGWL…GNPE), 611 to 648 (CNDG…LVDI), 768 to 807 (QGML…GLKA), 898 to 936 (MALS…TIEA), 968 to 1008 (QGIG…WQEI), and 1029 to 1066 (VSVH…KDPV). The tract at residues 1133–1165 (IAENDPAYTRENLGDDDEDMVSSSSGKSIRANP) is disordered. HEAT repeat units follow at residues 1238–1269 (MRPI…LLEQ), 1270–1306 (YQAQ…TSGI), 1312–1354 (VAVK…AHAS), 1372–1410 (VEFE…NLKK), 1434–1474 (EAWP…LEAE), 1550–1586 (DLCQ…NCPK), 1783–1820 (VMLK…RYNN), 1836–1874 (GDIV…HSIT), 1880–1917 (GFMS…LVSH), and 1966–2006 (AMDI…QVST). The tract at residues 1992 to 2203 (EALSTMPTSF…DESSKEHVGA (212 aa)) is disordered. Polar residues predominate over residues 1996-2009 (TMPTSFNQVSTVES). A compositionally biased stretch (acidic residues) spans 2010-2027 (GTDEEEEEEEDDDDDDWD). Residues 2028-2040 (TFQSFPASTNLEG) are compositionally biased toward polar residues. Acidic residues predominate over residues 2062-2072 (QDDESNAEETD). Basic and acidic residues-rich tracts occupy residues 2073-2096 (DQHL…SKEV) and 2108-2124 (TRED…EETV). Residues 2150–2164 (NEQSVESKNLESENI) show a composition bias toward polar residues. A compositionally biased stretch (basic and acidic residues) spans 2191 to 2202 (SPEDESSKEHVG).

The protein belongs to the HEATR5 family.

Its function is as follows. May regulate multiple metabolic, hormonal and stress-related pathways. Required for carbohydrate metabolism and homoeostasis. May also monitor ethylene biosynthesis and senescence. This chain is Protein SWEETIE, found in Arabidopsis thaliana (Mouse-ear cress).